A 132-amino-acid chain; its full sequence is Agouti-signaling protein (132 aa).

Residues 1-22 form the signal peptide; the sequence is MDVTRLLLATLLVFLCFFTAYS. Asn39 is a glycosylation site (N-linked (GlcNAc...) asparagine). The interval 58–88 is disordered; it reads KSKQMSRKEAEKKRSSKKEASMKKVARPRTP. Residues 63 to 79 are compositionally biased toward basic and acidic residues; that stretch reads SRKEAEKKRSSKKEASM. 5 disulfides stabilise this stretch: Cys93/Cys108, Cys100/Cys114, Cys107/Cys125, Cys111/Cys132, and Cys116/Cys123. Positions 93 to 132 constitute an Agouti domain; the sequence is CVATRDSCKPPAPACCDPCASCQCRFFRSACSCRVLSLNC.

It localises to the secreted. Its function is as follows. Involved in the regulation of melanogenesis. The binding of ASP to MC1R precludes alpha-MSH initiated signaling and thus blocks production of cAMP, leading to a down-regulation of eumelanogenesis (brown/black pigment) and thus increasing synthesis of pheomelanin (yellow/red pigment). The sequence is that of Agouti-signaling protein (ASIP) from Cercopithecus mitis (Blue monkey).